Consider the following 396-residue polypeptide: Elongation factor Tu (396 aa).

A tr-type G domain is found at 10–205 (KPHVNIGTIG…AVDESIPDPV (196 aa)). A G1 region spans residues 19–26 (GHVDHGKT). 19–26 (GHVDHGKT) contacts GTP. Thr26 contacts Mg(2+). The G2 stretch occupies residues 62–66 (GITIN). The segment at 83-86 (DAPG) is G3. GTP-binding positions include 83-87 (DAPGH) and 138-141 (NKAD). A G4 region spans residues 138-141 (NKAD). The tract at residues 175-177 (SAL) is G5.

It belongs to the TRAFAC class translation factor GTPase superfamily. Classic translation factor GTPase family. EF-Tu/EF-1A subfamily. As to quaternary structure, monomer.

It is found in the cytoplasm. It carries out the reaction GTP + H2O = GDP + phosphate + H(+). GTP hydrolase that promotes the GTP-dependent binding of aminoacyl-tRNA to the A-site of ribosomes during protein biosynthesis. This Mycobacterium sp. (strain JLS) protein is Elongation factor Tu.